Here is a 155-residue protein sequence, read N- to C-terminus: Transcriptional repressor NrdR (155 aa).

A zinc finger lies at 3–34 (CPYCGHLEDRVVDSRETQDGQATRRRRACLSC). The 91-residue stretch at 49-139 (PQVVKKDGRR…VYRAFRDVGE (91 aa)) folds into the ATP-cone domain.

The protein belongs to the NrdR family. It depends on Zn(2+) as a cofactor.

In terms of biological role, negatively regulates transcription of bacterial ribonucleotide reductase nrd genes and operons by binding to NrdR-boxes. The chain is Transcriptional repressor NrdR from Anaeromyxobacter dehalogenans (strain 2CP-1 / ATCC BAA-258).